The chain runs to 397 residues: Putative F-box protein At1g26510 (397 aa).

Positions methionine 1 to lysine 23 are disordered. One can recognise an F-box domain in the interval glutamine 24 to serine 71.

This is Putative F-box protein At1g26510 from Arabidopsis thaliana (Mouse-ear cress).